The primary structure comprises 461 residues: Deoxyhypusine synthase (461 aa).

Residues 166 to 167 (EH), glutamate 331, histidine 377, 403 to 405 (GSD), and 412 to 418 (EAVSWGK) contribute to the spermidine site. The active-site Nucleophile is lysine 418. The chain crosses the membrane as a helical span at residues 428 to 448 (VYSEVTIVFPLIVVHVFVAWV).

Belongs to the deoxyhypusine synthase family. As to quaternary structure, heterotetramer formed by a homodimer of the non-catalytic regulatory subunit DHSp and a homodimer of the catalytic subunit DHSc where DHSc appears to bind spermidine and DHSp appears to bind NAD(+). Requires NAD(+) as cofactor.

The protein localises to the membrane. It catalyses the reaction [eIF5A protein]-L-lysine + spermidine = [eIF5A protein]-deoxyhypusine + propane-1,3-diamine. The protein operates within protein modification; eIF5A hypusination. Its activity is regulated as follows. Allosterically activated by DHSp. Inhibited by spermididine analog N1-guanyl-1,7-diamineoheptane (GC7). Its function is as follows. In association with the non-catalytic regulatory subunit DHSp, catalyzes the NAD-dependent oxidative cleavage of spermidine and the subsequent transfer of the butylamine moiety of spermidine to the epsilon-amino group of a specific lysine residue of the eIF5A precursor protein to form the intermediate deoxyhypusine residue. Regulates protein levels of its regulatory subunit DHSp. Required for cell growth and survival. This Trypanosoma brucei brucei (strain 927/4 GUTat10.1) protein is Deoxyhypusine synthase.